We begin with the raw amino-acid sequence, 627 residues long: Coiled-coil domain-containing protein 22 (627 aa).

The interval 1-321 (MEEADRILIH…VSDVPATSRR (321 aa)) is sufficient for interaction with COMMD1. The interval 1–447 (MEEADRILIH…LQDCRELESS (447 aa)) is sufficicient and required for interaction with CCDC93. The segment at 218-243 (TGRDRPGDEDWVHRTSRLPPQEDTRA) is disordered. A compositionally biased stretch (basic and acidic residues) spans 219 to 230 (GRDRPGDEDWVH). Residues 320 to 627 (RRPEQVTWAA…AGLLGRVREA (308 aa)) are a coiled coil. S410 carries the phosphoserine modification.

The protein belongs to the CCDC22 family. In terms of assembly, component of the commander complex consisting of the CCC subcomplex and the retriever subcomplex. Component of the CCC (COMMD/CCDC22/CCDC93) subcomplex consisting of COMMD1, COMMD2, COMMD3, COMMD4, COMMD5, COMMD6, COMMD7, COMMD8, COMMD9, COMMD10, CCDC22 and CCDC93. Forms a coiled-coil heterodimer with CCDC22; this heterodimer interacts with the guanine nucleotide exchange factor DENND10; the interaction is direct. Interacts with CUL1, CUL2, CUL3, SKP1, BTRC. Interacts with SNX17 and SNX31. Interacts with CPNE1 and CPNE4. Widely expressed in adult tissues and in fetal liver and brain, with highest levels in prostate and lowest in skeletal muscle.

The protein resides in the endosome. Its subcellular location is the cytoplasm. It is found in the cytoskeleton. The protein localises to the microtubule organizing center. It localises to the centrosome. In terms of biological role, component of the commander complex that is essential for endosomal recycling of transmembrane cargos; the Commander complex is composed of composed of the CCC subcomplex and the retriever subcomplex. Component of the CCC complex, which is involved in the regulation of endosomal recycling of surface proteins, including integrins, signaling receptor and channels. Involved in regulation of NF-kappa-B signaling. Promotes ubiquitination of I-kappa-B-kinase subunit IKBKB and its subsequent proteasomal degradation leading to NF-kappa-B activation; the function may involve association with COMMD8 and a CUL1-dependent E3 ubiquitin ligase complex. May down-regulate NF-kappa-B activity via association with COMMD1 and involving a CUL2-dependent E3 ubiquitin ligase complex. Regulates the cellular localization of COMM domain-containing proteins, such as COMMD1 and COMMD10. Component of the CCC complex, which is involved in the regulation of endosomal recycling of surface proteins, including integrins, signaling receptor and channels. The CCC complex associates with SNX17, retriever and WASH complexes to prevent lysosomal degradation and promote cell surface recycling of numerous cargos such as integrins ITGA5:ITGB1. Plays a role in copper ion homeostasis. Involved in copper-dependent ATP7A trafficking between the trans-Golgi network and vesicles in the cell periphery; the function is proposed to depend on its association within the CCC complex and cooperation with the WASH complex on early endosomes. (Microbial infection) The CCC complex, in collaboration with the heterotrimeric retriever complex, mediates the exit of human papillomavirus to the cell surface. This chain is Coiled-coil domain-containing protein 22 (CCDC22), found in Homo sapiens (Human).